Reading from the N-terminus, the 100-residue chain is Urease subunit gamma (100 aa).

The protein belongs to the urease gamma subunit family. Heterotrimer of UreA (gamma), UreB (beta) and UreC (alpha) subunits. Three heterotrimers associate to form the active enzyme.

It localises to the cytoplasm. The catalysed reaction is urea + 2 H2O + H(+) = hydrogencarbonate + 2 NH4(+). It participates in nitrogen metabolism; urea degradation; CO(2) and NH(3) from urea (urease route): step 1/1. The polypeptide is Urease subunit gamma (Prochlorococcus marinus subsp. pastoris (strain CCMP1986 / NIES-2087 / MED4)).